The sequence spans 406 residues: Protein IWS1 homolog 2 (406 aa).

Disordered regions lie at residues 1–28 and 41–89; these read MQEL…TGRR and DEVE…SEEV. Positions 10–24 are enriched in basic and acidic residues; the sequence is EWVKELEGENEESKF. Residues 41 to 56 are compositionally biased toward acidic residues; it reads DEVEEDLDDFTEPADD. The span at 69–78 shows a compositional bias: basic and acidic residues; the sequence is KKDESGLEKT. One can recognise a TFIIS N-terminal domain in the interval 201–284; it reads NLLKNWLEPL…NKWGRIIYNK (84 aa).

Belongs to the IWS1 family.

It localises to the nucleus. In terms of biological role, transcription factor involved in RNA polymerase II (RNAPII) transcription regulation. Involved in transcription elongation. May function at post-recruitment and elongation steps of transcription. This is Protein IWS1 homolog 2 from Arabidopsis thaliana (Mouse-ear cress).